Reading from the N-terminus, the 60-residue chain is Ribosome biogenesis protein Nop10 (60 aa).

It belongs to the NOP10 family.

Involved in ribosome biogenesis; more specifically in 18S rRNA pseudouridylation and in cleavage of pre-rRNA. This is Ribosome biogenesis protein Nop10 from Haloquadratum walsbyi (strain DSM 16790 / HBSQ001).